A 1081-amino-acid polypeptide reads, in one-letter code: Probable sucrose-phosphate synthase 2 (1081 aa).

Disordered stretches follow at residues 116–152 (EQGR…PRGN), 239–267 (EPTE…EDLG), and 760–780 (IKRQ…GDVP). Acidic residues predominate over residues 256-267 (EPEEEEEEEDLG).

This sequence belongs to the glycosyltransferase 1 family. As to quaternary structure, homodimer or homotetramer.

The catalysed reaction is beta-D-fructose 6-phosphate + UDP-alpha-D-glucose = sucrose 6(F)-phosphate + UDP + H(+). Its pathway is glycan biosynthesis; sucrose biosynthesis; sucrose from D-fructose 6-phosphate and UDP-alpha-D-glucose: step 1/2. With respect to regulation, activity is regulated by phosphorylation and moderated by concentration of metabolites and light. Its function is as follows. Plays a role in photosynthetic sucrose synthesis by catalyzing the rate-limiting step of sucrose biosynthesis from UDP-glucose and fructose- 6-phosphate. Involved in the regulation of carbon partitioning in the leaves of plants. May regulate the synthesis of sucrose and therefore play a major role as a limiting factor in the export of photoassimilates out of the leaf. Plays a role for sucrose availability that is essential for plant growth and fiber elongation. The sequence is that of Probable sucrose-phosphate synthase 2 (SPS2) from Craterostigma plantagineum (Blue gem).